The chain runs to 59 residues: Photosystem II reaction center protein K (59 aa).

A propeptide spanning residues 1–22 is cleaved from the precursor; sequence MILYSHLSTLIDIDLSNNIFLA. A helical membrane pass occupies residues 30 to 50; the sequence is IFDPLVDVMPVIPVFFLLLAF.

It belongs to the PsbK family. In terms of assembly, PSII is composed of 1 copy each of membrane proteins PsbA, PsbB, PsbC, PsbD, PsbE, PsbF, PsbH, PsbI, PsbJ, PsbK, PsbL, PsbM, PsbT, PsbX, PsbY, PsbZ, Psb30/Ycf12, at least 3 peripheral proteins of the oxygen-evolving complex and a large number of cofactors. It forms dimeric complexes.

It is found in the plastid. The protein resides in the chloroplast thylakoid membrane. In terms of biological role, one of the components of the core complex of photosystem II (PSII). PSII is a light-driven water:plastoquinone oxidoreductase that uses light energy to abstract electrons from H(2)O, generating O(2) and a proton gradient subsequently used for ATP formation. It consists of a core antenna complex that captures photons, and an electron transfer chain that converts photonic excitation into a charge separation. This is Photosystem II reaction center protein K from Chara vulgaris (Common stonewort).